Here is a 361-residue protein sequence, read N- to C-terminus: Putative agmatine deiminase (361 aa).

Cysteine 354 functions as the Amidino-cysteine intermediate in the catalytic mechanism.

It belongs to the agmatine deiminase family.

It catalyses the reaction agmatine + H2O = N-carbamoylputrescine + NH4(+). This Streptococcus pneumoniae (strain ATCC BAA-255 / R6) protein is Putative agmatine deiminase.